A 303-amino-acid chain; its full sequence is tRNA pseudouridine synthase B (303 aa).

The active-site Nucleophile is the aspartate 47.

This sequence belongs to the pseudouridine synthase TruB family. Type 1 subfamily.

It carries out the reaction uridine(55) in tRNA = pseudouridine(55) in tRNA. Functionally, responsible for synthesis of pseudouridine from uracil-55 in the psi GC loop of transfer RNAs. The polypeptide is tRNA pseudouridine synthase B (Legionella pneumophila subsp. pneumophila (strain Philadelphia 1 / ATCC 33152 / DSM 7513)).